The following is an 807-amino-acid chain: Phenylalanine--tRNA ligase beta subunit (807 aa).

The tRNA-binding domain occupies 39-153 (SARSQGVVVG…EIPAVGTPVA (115 aa)). In terms of domain architecture, B5 spans 407 to 491 (RTPVPLQLRR…RLVGFDKFGS (85 aa)). The Mg(2+) site is built by Asp-469, Asp-475, Glu-478, and Glu-479. The region spanning 713-806 (PTVPASERDL…LSKQFKAELR (94 aa)) is the FDX-ACB domain.

Belongs to the phenylalanyl-tRNA synthetase beta subunit family. Type 1 subfamily. As to quaternary structure, tetramer of two alpha and two beta subunits. The cofactor is Mg(2+).

Its subcellular location is the cytoplasm. It catalyses the reaction tRNA(Phe) + L-phenylalanine + ATP = L-phenylalanyl-tRNA(Phe) + AMP + diphosphate + H(+). This chain is Phenylalanine--tRNA ligase beta subunit, found in Synechococcus sp. (strain CC9902).